The primary structure comprises 382 residues: D-galactonate dehydratase 1 (382 aa).

Residue D183 participates in Mg(2+) binding. The Proton donor role is filled by H185. Mg(2+) contacts are provided by E209 and E235. H285 acts as the Proton acceptor in catalysis.

The protein belongs to the mandelate racemase/muconate lactonizing enzyme family. GalD subfamily. Mg(2+) is required as a cofactor.

It catalyses the reaction D-galactonate = 2-dehydro-3-deoxy-D-galactonate + H2O. Its pathway is carbohydrate acid metabolism; D-galactonate degradation; D-glyceraldehyde 3-phosphate and pyruvate from D-galactonate: step 1/3. Functionally, catalyzes the dehydration of D-galactonate to 2-keto-3-deoxy-D-galactonate. In Escherichia coli (strain SMS-3-5 / SECEC), this protein is D-galactonate dehydratase 1.